The following is a 578-amino-acid chain: Protein RIK (578 aa).

The segment at 1-34 (MTEDNDEARVPLSDSSTTNDASRTRQRRKRKWDK) is disordered. Residues 206–273 (SSNVAARIRG…KSIDDAKRLA (68 aa)) enclose the KH domain. Over residues 413 to 425 (ATSLSIPSDNASN) the composition is skewed to polar residues. Positions 413 to 578 (ATSLSIPSDN…DPDEPLTTRS (166 aa)) are disordered. A compositionally biased stretch (pro residues) spans 472 to 492 (PPSPRSVMPPPPPKTIAPPPS). Low complexity-rich tracts occupy residues 493 to 503 (KTMSPPSSKSM) and 510 to 521 (SKTMSPLSSKSM). Over residues 560–572 (YGDDEDDDDDPDE) the composition is skewed to acidic residues.

As to quaternary structure, interacts with AS1. Expressed in vegetative tissues.

Its subcellular location is the nucleus. This chain is Protein RIK (RIK), found in Arabidopsis thaliana (Mouse-ear cress).